A 34-amino-acid polypeptide reads, in one-letter code: Sperm protein EM1 (34 aa).

Residues 1 to 17 (AGSKSRSRSRSRSRSKS) are compositionally biased toward basic residues. The segment at 1–34 (AGSKSRSRSRSRSRSKSPAKSASPKSAASPRASR) is disordered. 7 consecutive repeat copies span residues 3–4 (SK), 5–6 (SR), 7–8 (SR), 9–10 (SR), 11–12 (SR), 13–14 (SR), and 15–16 (SK). The interval 3 to 16 (SKSRSRSRSRSRSK) is 7 X 2 AA tandem repeats of S-[KR]. A compositionally biased stretch (low complexity) spans 18–34 (PAKSASPKSAASPRASR).

Sperm.

It is found in the nucleus. The protein is Sperm protein EM1 of Ensis minor (Razor shell).